The sequence spans 418 residues: uncharacterized protein (418 aa).

This is an uncharacterized protein from Escherichia coli (strain K12).